Reading from the N-terminus, the 218-residue chain is Serine/threonine-protein phosphatase 2 (218 aa).

Asp-22, His-24, Asp-51, and Asn-77 together coordinate Mn(2+). The Proton donor role is filled by His-78. His-187 is a Mn(2+) binding site.

Belongs to the PPP phosphatase family. Mn(2+) serves as cofactor.

The enzyme catalyses O-phospho-L-seryl-[protein] + H2O = L-seryl-[protein] + phosphate. The catalysed reaction is O-phospho-L-threonyl-[protein] + H2O = L-threonyl-[protein] + phosphate. Functionally, has been shown, in vitro, to act on Ser, Thr and Tyr-phosphorylated substrates. This Escherichia coli (strain K12) protein is Serine/threonine-protein phosphatase 2 (pphB).